Reading from the N-terminus, the 392-residue chain is Acetyl-CoA acetyltransferase (392 aa).

Catalysis depends on C87, which acts as the Acyl-thioester intermediate. Active-site proton acceptor residues include H348 and C378.

The protein belongs to the thiolase-like superfamily. Thiolase family.

It localises to the cytoplasm. The enzyme catalyses 2 acetyl-CoA = acetoacetyl-CoA + CoA. Its pathway is metabolic intermediate biosynthesis; (R)-mevalonate biosynthesis; (R)-mevalonate from acetyl-CoA: step 1/3. Functionally, involved in the production of polyhydroxyalkonic acids (PHAs), composed primarily of 3-hydroxybutyric acid (3HB) and 3-hydroxyvaleric acid (3HV). The protein is Acetyl-CoA acetyltransferase (phaA) of Chromobacterium violaceum (strain ATCC 12472 / DSM 30191 / JCM 1249 / CCUG 213 / NBRC 12614 / NCIMB 9131 / NCTC 9757 / MK).